The following is a 145-amino-acid chain: MELLQVLKRGLQQVSGHGGLRGYLRVLFRANDVRVGTLVGEDKYGNKYYEDNKQFFGRHRWVIYTTEMNGKNTFWDVDGSMVPPEWHRWLHCMTDDPPTVKPPTARKFIWTNHKFNLSGTPQQYVPYSTTRKKIQEWVPPSTPYK.

Position 1 is an N-acetylmethionine (Met1).

Belongs to the complex I NDUFA12 subunit family. Complex I is composed of 45 different subunits.

It is found in the mitochondrion inner membrane. Functionally, accessory subunit of the mitochondrial membrane respiratory chain NADH dehydrogenase (Complex I), that is believed not to be involved in catalysis. Complex I functions in the transfer of electrons from NADH to the respiratory chain. The immediate electron acceptor for the enzyme is believed to be ubiquinone. In Bos taurus (Bovine), this protein is NADH dehydrogenase [ubiquinone] 1 alpha subcomplex subunit 12 (NDUFA12).